An 86-amino-acid chain; its full sequence is Gas vesicle protein M (86 aa).

It belongs to the gas vesicle GvpA family. GvpF to GvpM interact with each other in vitro, and may form multi-subunit complex(es). Might interact with GvpA.

The protein localises to the gas vesicle. Proteins GvpF to GvpM might be involved in nucleating gas vesicle formation. A minor component of the gas vesicle. Gas vesicles are small, hollow, gas filled protein structures found in some microorganisms. They allow positioning of halobacteria at the optimal depth for growth in the poorly aerated, shallow brine pools of their habitat. In terms of biological role, expression of a 9.5 kb mc-vac DNA fragment containing 2 divergently transcribed regions (gvpD-gvpE-gvpF-gvpG-gvpH-gvpI-gvpJ-gvpK-gvpL-gvpM and gvpA-gvpC-gvpN-gvpO) allows H.volcanii to produce gas vesicles. The protein is Gas vesicle protein M of Haloferax mediterranei (strain ATCC 33500 / DSM 1411 / JCM 8866 / NBRC 14739 / NCIMB 2177 / R-4) (Halobacterium mediterranei).